A 405-amino-acid chain; its full sequence is Tryptophan synthase beta chain (405 aa).

Residue Lys-98 is modified to N6-(pyridoxal phosphate)lysine.

This sequence belongs to the TrpB family. As to quaternary structure, tetramer of two alpha and two beta chains. Pyridoxal 5'-phosphate is required as a cofactor.

The enzyme catalyses (1S,2R)-1-C-(indol-3-yl)glycerol 3-phosphate + L-serine = D-glyceraldehyde 3-phosphate + L-tryptophan + H2O. It functions in the pathway amino-acid biosynthesis; L-tryptophan biosynthesis; L-tryptophan from chorismate: step 5/5. In terms of biological role, the beta subunit is responsible for the synthesis of L-tryptophan from indole and L-serine. This chain is Tryptophan synthase beta chain, found in Stenotrophomonas maltophilia (strain K279a).